Here is a 361-residue protein sequence, read N- to C-terminus: DNA-(apurinic or apyrimidinic site) endonuclease (361 aa).

A disordered region spans residues 1–90; that stretch reads MTSRTKKLKM…TNKTTASVSI (90 aa). Acidic residues predominate over residues 25 to 39; that stretch reads TSEEEKEEVEEEEEE. The Nuclear localization signal signature appears at 41 to 44; that stretch reads KKRK. Basic residues predominate over residues 43–64; that stretch reads RKLVKKTPAKKAPAKKAAAKKK. The span at 68-80 shows a compositional bias: acidic residues; that stretch reads EDEDEEEKEEEEE. E139 serves as a coordination point for Mg(2+). Y211 is a catalytic residue. Mg(2+) contacts are provided by D252, N254, and D350. The active-site Proton donor/acceptor is the D252.

It belongs to the DNA repair enzymes AP/ExoA family. It depends on Mg(2+) as a cofactor. Mn(2+) serves as cofactor.

The protein localises to the nucleus. The protein is DNA-(apurinic or apyrimidinic site) endonuclease (apeA) of Dictyostelium discoideum (Social amoeba).